A 198-amino-acid chain; its full sequence is Glycerol-3-phosphate acyltransferase (198 aa).

A run of 5 helical transmembrane segments spans residues 2 to 22 (YAVL…AYIL), 48 to 70 (LGYK…AVLI), 75 to 97 (MGNT…PVFL), 111 to 131 (VVMT…VTVI), and 154 to 174 (IFWN…LAIF).

Belongs to the PlsY family. Probably interacts with PlsX.

The protein localises to the cell membrane. It carries out the reaction an acyl phosphate + sn-glycerol 3-phosphate = a 1-acyl-sn-glycero-3-phosphate + phosphate. Its pathway is lipid metabolism; phospholipid metabolism. In terms of biological role, catalyzes the transfer of an acyl group from acyl-phosphate (acyl-PO(4)) to glycerol-3-phosphate (G3P) to form lysophosphatidic acid (LPA). This enzyme utilizes acyl-phosphate as fatty acyl donor, but not acyl-CoA or acyl-ACP. This is Glycerol-3-phosphate acyltransferase from Thermoanaerobacter pseudethanolicus (strain ATCC 33223 / 39E) (Clostridium thermohydrosulfuricum).